We begin with the raw amino-acid sequence, 214 residues long: Rhodanese-like domain-containing protein 10 (214 aa).

The Rhodanese domain maps to 58–182 (ASEGYILLDV…VSEGDFPEIE (125 aa)). Catalysis depends on Cys-142, which acts as the Cysteine persulfide intermediate. The chain crosses the membrane as a helical span at residues 190 to 206 (ATIGGVSFYLLKLLVLL).

The protein resides in the membrane. The polypeptide is Rhodanese-like domain-containing protein 10 (STR10) (Arabidopsis thaliana (Mouse-ear cress)).